A 467-amino-acid chain; its full sequence is 3-isopropylmalate dehydratase large subunit (467 aa).

Residues Cys347, Cys407, and Cys410 each coordinate [4Fe-4S] cluster.

The protein belongs to the aconitase/IPM isomerase family. LeuC type 1 subfamily. In terms of assembly, heterodimer of LeuC and LeuD. The cofactor is [4Fe-4S] cluster.

It catalyses the reaction (2R,3S)-3-isopropylmalate = (2S)-2-isopropylmalate. It functions in the pathway amino-acid biosynthesis; L-leucine biosynthesis; L-leucine from 3-methyl-2-oxobutanoate: step 2/4. Its function is as follows. Catalyzes the isomerization between 2-isopropylmalate and 3-isopropylmalate, via the formation of 2-isopropylmaleate. This chain is 3-isopropylmalate dehydratase large subunit, found in Nostoc sp. (strain PCC 7120 / SAG 25.82 / UTEX 2576).